The primary structure comprises 148 residues: Arginine repressor (148 aa).

This sequence belongs to the ArgR family.

The protein resides in the cytoplasm. It functions in the pathway amino-acid biosynthesis; L-arginine biosynthesis [regulation]. Its function is as follows. Regulates arginine biosynthesis genes. The polypeptide is Arginine repressor (Chlorobium phaeobacteroides (strain BS1)).